Here is a 96-residue protein sequence, read N- to C-terminus: Aspartyl/glutamyl-tRNA(Asn/Gln) amidotransferase subunit C (96 aa).

It belongs to the GatC family. Heterotrimer of A, B and C subunits.

It carries out the reaction L-glutamyl-tRNA(Gln) + L-glutamine + ATP + H2O = L-glutaminyl-tRNA(Gln) + L-glutamate + ADP + phosphate + H(+). The catalysed reaction is L-aspartyl-tRNA(Asn) + L-glutamine + ATP + H2O = L-asparaginyl-tRNA(Asn) + L-glutamate + ADP + phosphate + 2 H(+). Allows the formation of correctly charged Asn-tRNA(Asn) or Gln-tRNA(Gln) through the transamidation of misacylated Asp-tRNA(Asn) or Glu-tRNA(Gln) in organisms which lack either or both of asparaginyl-tRNA or glutaminyl-tRNA synthetases. The reaction takes place in the presence of glutamine and ATP through an activated phospho-Asp-tRNA(Asn) or phospho-Glu-tRNA(Gln). The sequence is that of Aspartyl/glutamyl-tRNA(Asn/Gln) amidotransferase subunit C from Bacillus licheniformis (strain ATCC 14580 / DSM 13 / JCM 2505 / CCUG 7422 / NBRC 12200 / NCIMB 9375 / NCTC 10341 / NRRL NRS-1264 / Gibson 46).